Reading from the N-terminus, the 287-residue chain is Spermidine/putrescine transport system permease protein PotB (287 aa).

Over methionine 1–valine 10 the chain is Cytoplasmic. Residues valine 11 to isoleucine 31 form a helical membrane-spanning segment. At glycine 32 to asparagine 70 the chain is on the periplasmic side. Residues leucine 65–tyrosine 271 form the ABC transmembrane type-1 domain. Residues methionine 71 to alanine 91 form a helical membrane-spanning segment. At lysine 92–proline 99 the chain is on the cytoplasmic side. A helical membrane pass occupies residues leucine 100–leucine 120. Topologically, residues lysine 121–arginine 145 are periplasmic. The chain crosses the membrane as a helical span at residues isoleucine 146–valine 166. Over methionine 167–arginine 197 the chain is Cytoplasmic. The chain crosses the membrane as a helical span at residues isoleucine 198–alanine 218. The Periplasmic segment spans residues methionine 219–proline 251. Residues phenylalanine 252–tryptophan 272 traverse the membrane as a helical segment. The Cytoplasmic segment spans residues arginine 273 to aspartate 287.

Belongs to the binding-protein-dependent transport system permease family. CysTW subfamily.

Its subcellular location is the cell inner membrane. Required for the activity of the bacterial periplasmic transport system of putrescine and spermidine. This chain is Spermidine/putrescine transport system permease protein PotB (potB), found in Salmonella typhi.